Consider the following 366-residue polypeptide: tRNA pseudouridine synthase B (366 aa).

The disordered stretch occupies residues 1–55 (MTVTTPDALLAPHDVQHAGADESAAQIRKPRDNNDPRNANRGGGNGKPRRDKRDV). Aspartate 92 (nucleophile) is an active-site residue.

This sequence belongs to the pseudouridine synthase TruB family. Type 1 subfamily.

The catalysed reaction is uridine(55) in tRNA = pseudouridine(55) in tRNA. Responsible for synthesis of pseudouridine from uracil-55 in the psi GC loop of transfer RNAs. The protein is tRNA pseudouridine synthase B of Rhodopseudomonas palustris (strain ATCC BAA-98 / CGA009).